A 186-amino-acid chain; its full sequence is Putative 5'(3')-deoxyribonucleotidase (186 aa).

It belongs to the 5'(3')-deoxyribonucleotidase family. The cofactor is Mg(2+).

Functionally, dephosphorylates the 5' and 2'(3')-phosphates of deoxyribonucleotides. This chain is Putative 5'(3')-deoxyribonucleotidase, found in Bordetella parapertussis (strain 12822 / ATCC BAA-587 / NCTC 13253).